We begin with the raw amino-acid sequence, 425 residues long: Enolase 2 (425 aa).

Gln-163 contacts (2R)-2-phosphoglycerate. Catalysis depends on Glu-205, which acts as the Proton donor. Residues Asp-242, Glu-285, and Asp-312 each contribute to the Mg(2+) site. Positions 337, 366, 367, and 388 each coordinate (2R)-2-phosphoglycerate. The active-site Proton acceptor is Lys-337.

This sequence belongs to the enolase family. Mg(2+) serves as cofactor.

It is found in the cytoplasm. The protein localises to the secreted. It localises to the cell surface. It carries out the reaction (2R)-2-phosphoglycerate = phosphoenolpyruvate + H2O. Its pathway is carbohydrate degradation; glycolysis; pyruvate from D-glyceraldehyde 3-phosphate: step 4/5. Its function is as follows. Catalyzes the reversible conversion of 2-phosphoglycerate (2-PG) into phosphoenolpyruvate (PEP). It is essential for the degradation of carbohydrates via glycolysis. The polypeptide is Enolase 2 (Cupriavidus metallidurans (strain ATCC 43123 / DSM 2839 / NBRC 102507 / CH34) (Ralstonia metallidurans)).